The sequence spans 236 residues: Eukaryotic translation initiation factor 3 subunit J (236 aa).

The tract at residues 1-84 (MADDWESAAD…RLEEEAEAQR (84 aa)) is disordered. Acidic residues predominate over residues 28–46 (GEDEDEDIKDSWEDEEEKK). Composition is skewed to basic and acidic residues over residues 47–58 (DEEKPTKTEAPA) and 68–77 (AKLEQQARLE).

The protein belongs to the eIF-3 subunit J family. In terms of assembly, component of the eukaryotic translation initiation factor 3 (eIF-3) complex. The eIF-3 complex interacts with pix.

It is found in the cytoplasm. Its function is as follows. Component of the eukaryotic translation initiation factor 3 (eIF-3) complex, which is involved in protein synthesis of a specialized repertoire of mRNAs and, together with other initiation factors, stimulates binding of mRNA and methionyl-tRNAi to the 40S ribosome. The eIF-3 complex specifically targets and initiates translation of a subset of mRNAs involved in cell proliferation. This chain is Eukaryotic translation initiation factor 3 subunit J, found in Drosophila yakuba (Fruit fly).